Here is a 121-residue protein sequence, read N- to C-terminus: Holin-like protein CidA (121 aa).

4 helical membrane-spanning segments follow: residues 3–23, 30–50, 58–78, and 89–109; these read WWKLSGQILLLFCFAWTGEWI, PVPGSIIGIFLLLISLKFNLV, GADFLLKELILFFIPSAVAVI, and IDLILIIMISTLCVTLVTGLL.

It belongs to the CidA/LrgA family. CidA subfamily.

It localises to the cell membrane. Increases the activity of extracellular murein hydrolases possibly by mediating their export via hole formation. Inhibited by the antiholin-like proteins LrgAB. In an unstressed cell, the LrgAB products probably inhibit the function of the CidA protein. When a cell is stressed by the addition of antibiotics or by other factors in the environment, CidA possibly oligomerizes within the bacterial cell membrane, creating lesions that disrupt the proton motive force, which in turn results in loss of cell viability. These lesions are also hypothesized to regulate the subsequent cell lysis by either allowing the murein hydrolases access to the cell wall substrate and/or regulating their activity by a possible change in the cell wall pH that results from loss of membrane potential. The polypeptide is Holin-like protein CidA (Bacillus cereus (strain ATCC 10987 / NRS 248)).